A 604-amino-acid polypeptide reads, in one-letter code: Glutamine--fructose-6-phosphate aminotransferase [isomerizing] (604 aa).

The Nucleophile; for GATase activity role is filled by C2. The region spanning 2 to 218 is the Glutamine amidotransferase type-2 domain; that stretch reads CGIVGVVGNR…DKELVILTKD (217 aa). 2 SIS domains span residues 284–423 and 456–594; these read IITS…ANGK and VQAL…VDKP. Catalysis depends on K599, which acts as the For Fru-6P isomerization activity.

Homodimer.

It is found in the cytoplasm. The enzyme catalyses D-fructose 6-phosphate + L-glutamine = D-glucosamine 6-phosphate + L-glutamate. Catalyzes the first step in hexosamine metabolism, converting fructose-6P into glucosamine-6P using glutamine as a nitrogen source. This is Glutamine--fructose-6-phosphate aminotransferase [isomerizing] from Streptococcus pyogenes serotype M1.